A 72-amino-acid chain; its full sequence is Nod factor export ATP-binding protein I (72 aa).

The protein belongs to the ABC transporter superfamily. Lipooligosaccharide exporter (TC 3.A.1.102) family. As to quaternary structure, the complex is composed of two ATP-binding proteins (NodI) and two transmembrane proteins (NodJ).

The protein resides in the cell inner membrane. In terms of biological role, part of the ABC transporter complex NodIJ involved in the export of the nodulation factors (Nod factors), the bacterial signal molecules that induce symbiosis and subsequent nodulation induction. Nod factors are LCO (lipo-chitin oligosaccharide), a modified beta-1,4-linked N-acetylglucosamine oligosaccharide. This subunit is responsible for energy coupling to the transport system. The protein is Nod factor export ATP-binding protein I of Rhizobium leguminosarum bv. trifolii.